The following is a 403-amino-acid chain: Phosphopentomutase (403 aa).

Mn(2+) is bound by residues Asp-13, Asp-298, His-303, Asp-339, His-340, and His-351.

Belongs to the phosphopentomutase family. Mn(2+) serves as cofactor.

It localises to the cytoplasm. It catalyses the reaction 2-deoxy-alpha-D-ribose 1-phosphate = 2-deoxy-D-ribose 5-phosphate. It carries out the reaction alpha-D-ribose 1-phosphate = D-ribose 5-phosphate. The protein operates within carbohydrate degradation; 2-deoxy-D-ribose 1-phosphate degradation; D-glyceraldehyde 3-phosphate and acetaldehyde from 2-deoxy-alpha-D-ribose 1-phosphate: step 1/2. Isomerase that catalyzes the conversion of deoxy-ribose 1-phosphate (dRib-1-P) and ribose 1-phosphate (Rib-1-P) to deoxy-ribose 5-phosphate (dRib-5-P) and ribose 5-phosphate (Rib-5-P), respectively. The sequence is that of Phosphopentomutase from Streptococcus thermophilus (strain ATCC BAA-250 / LMG 18311).